The chain runs to 127 residues: Aspartate 1-decarboxylase (127 aa).

The Schiff-base intermediate with substrate; via pyruvic acid role is filled by serine 25. Serine 25 bears the Pyruvic acid (Ser) mark. Residue threonine 57 coordinates substrate. The active-site Proton donor is tyrosine 58. 73–75 (GAA) is a binding site for substrate.

It belongs to the PanD family. In terms of assembly, heterooctamer of four alpha and four beta subunits. Pyruvate serves as cofactor. Post-translationally, is synthesized initially as an inactive proenzyme, which is activated by self-cleavage at a specific serine bond to produce a beta-subunit with a hydroxyl group at its C-terminus and an alpha-subunit with a pyruvoyl group at its N-terminus.

Its subcellular location is the cytoplasm. It carries out the reaction L-aspartate + H(+) = beta-alanine + CO2. Its pathway is cofactor biosynthesis; (R)-pantothenate biosynthesis; beta-alanine from L-aspartate: step 1/1. Catalyzes the pyruvoyl-dependent decarboxylation of aspartate to produce beta-alanine. The protein is Aspartate 1-decarboxylase of Bacillus pumilus (strain SAFR-032).